The chain runs to 154 residues: Myoglobin (154 aa).

A Globin domain is found at 2–148 (GLSDGEWQLV…FRNDIAAKYK (147 aa)). Ser4 carries the phosphoserine modification. A nitrite-binding site is contributed by His65. His65 is a binding site for O2. Phosphothreonine occurs at positions 68 and 75. Residue His94 participates in heme b binding. Position 121 is a phosphoserine (Ser121).

This sequence belongs to the globin family. In terms of assembly, monomeric.

It is found in the cytoplasm. Its subcellular location is the sarcoplasm. It catalyses the reaction Fe(III)-heme b-[protein] + nitric oxide + H2O = Fe(II)-heme b-[protein] + nitrite + 2 H(+). The enzyme catalyses H2O2 + AH2 = A + 2 H2O. Monomeric heme protein which primary function is to store oxygen and facilitate its diffusion within muscle tissues. Reversibly binds oxygen through a pentacoordinated heme iron and enables its timely and efficient release as needed during periods of heightened demand. Depending on the oxidative conditions of tissues and cells, and in addition to its ability to bind oxygen, it also has a nitrite reductase activity whereby it regulates the production of bioactive nitric oxide. Under stress conditions, like hypoxia and anoxia, it also protects cells against reactive oxygen species thanks to its pseudoperoxidase activity. This chain is Myoglobin, found in Mus musculus (Mouse).